Here is a 187-residue protein sequence, read N- to C-terminus: Ribonuclease HII (187 aa).

In terms of domain architecture, RNase H type-2 spans Met1–Glu187. Positions 7, 8, and 99 each coordinate a divalent metal cation.

It belongs to the RNase HII family. Mn(2+) serves as cofactor. The cofactor is Mg(2+).

The protein localises to the cytoplasm. It catalyses the reaction Endonucleolytic cleavage to 5'-phosphomonoester.. Its function is as follows. Endonuclease that specifically degrades the RNA of RNA-DNA hybrids. The sequence is that of Ribonuclease HII from Francisella tularensis subsp. holarctica (strain FTNF002-00 / FTA).